Consider the following 159-residue polypeptide: Crossover junction endodeoxyribonuclease RuvC (159 aa).

Catalysis depends on residues Asp7, Glu66, and Asp139. Mg(2+) contacts are provided by Asp7, Glu66, and Asp139.

The protein belongs to the RuvC family. Homodimer which binds Holliday junction (HJ) DNA. The HJ becomes 2-fold symmetrical on binding to RuvC with unstacked arms; it has a different conformation from HJ DNA in complex with RuvA. In the full resolvosome a probable DNA-RuvA(4)-RuvB(12)-RuvC(2) complex forms which resolves the HJ. Mg(2+) is required as a cofactor.

The protein resides in the cytoplasm. It carries out the reaction Endonucleolytic cleavage at a junction such as a reciprocal single-stranded crossover between two homologous DNA duplexes (Holliday junction).. Functionally, the RuvA-RuvB-RuvC complex processes Holliday junction (HJ) DNA during genetic recombination and DNA repair. Endonuclease that resolves HJ intermediates. Cleaves cruciform DNA by making single-stranded nicks across the HJ at symmetrical positions within the homologous arms, yielding a 5'-phosphate and a 3'-hydroxyl group; requires a central core of homology in the junction. The consensus cleavage sequence is 5'-(A/T)TT(C/G)-3'. Cleavage occurs on the 3'-side of the TT dinucleotide at the point of strand exchange. HJ branch migration catalyzed by RuvA-RuvB allows RuvC to scan DNA until it finds its consensus sequence, where it cleaves and resolves the cruciform DNA. This is Crossover junction endodeoxyribonuclease RuvC from Sulfurovum sp. (strain NBC37-1).